Here is a 448-residue protein sequence, read N- to C-terminus: Histidinol dehydrogenase (448 aa).

Y136, Q197, and N220 together coordinate NAD(+). Residues S243, Q265, and H268 each coordinate substrate. 2 residues coordinate Zn(2+): Q265 and H268. Catalysis depends on proton acceptor residues E333 and H334. Substrate-binding residues include H334, D367, E421, and H426. Residue D367 participates in Zn(2+) binding. H426 serves as a coordination point for Zn(2+).

This sequence belongs to the histidinol dehydrogenase family. Requires Zn(2+) as cofactor.

It carries out the reaction L-histidinol + 2 NAD(+) + H2O = L-histidine + 2 NADH + 3 H(+). The protein operates within amino-acid biosynthesis; L-histidine biosynthesis; L-histidine from 5-phospho-alpha-D-ribose 1-diphosphate: step 9/9. Its function is as follows. Catalyzes the sequential NAD-dependent oxidations of L-histidinol to L-histidinaldehyde and then to L-histidine. This is Histidinol dehydrogenase from Pseudomonas syringae pv. syringae (strain B728a).